The primary structure comprises 101 residues: Small ribosomal subunit protein uS14c (101 aa).

This sequence belongs to the universal ribosomal protein uS14 family. As to quaternary structure, part of the 30S ribosomal subunit.

It is found in the plastid. Its function is as follows. Binds 16S rRNA, required for the assembly of 30S particles. This Helicosporidium sp. subsp. Simulium jonesii (Green alga) protein is Small ribosomal subunit protein uS14c.